The following is a 71-amino-acid chain: Omega-conotoxin-like Ac6.4 (71 aa).

The N-terminal stretch at 1-22 is a signal peptide; the sequence is MKLTCVVIVAVLLLTACQLLTA. A propeptide spanning residues 23 to 45 is cleaved from the precursor; the sequence is DDSRGTQKHRALRSDTKLSMSTR. Intrachain disulfides connect cysteine 46-cysteine 61, cysteine 53-cysteine 65, and cysteine 60-cysteine 70. The residue at position 70 (cysteine 70) is a Cysteine amide.

This sequence belongs to the conotoxin O1 superfamily. As to expression, expressed by the venom duct.

The protein resides in the secreted. In terms of biological role, omega-conotoxins act at presynaptic membranes, they bind and block voltage-gated calcium channels (Cav). The protein is Omega-conotoxin-like Ac6.4 of Conus achatinus (Little frog cone).